Reading from the N-terminus, the 392-residue chain is Formate-dependent phosphoribosylglycinamide formyltransferase (392 aa).

Residues 22 to 23 (EL) and E82 each bind N(1)-(5-phospho-beta-D-ribosyl)glycinamide. ATP-binding positions include R114, K155, 160–165 (SSGKGQ), 195–198 (EGVV), and E203. The 190-residue stretch at 119-308 (RLAAEELGLP…EFALHVRAFL (190 aa)) folds into the ATP-grasp domain. The Mg(2+) site is built by E267 and E279. Residues D286, K355, and 362–363 (RR) each bind N(1)-(5-phospho-beta-D-ribosyl)glycinamide.

Belongs to the PurK/PurT family. As to quaternary structure, homodimer.

The catalysed reaction is N(1)-(5-phospho-beta-D-ribosyl)glycinamide + formate + ATP = N(2)-formyl-N(1)-(5-phospho-beta-D-ribosyl)glycinamide + ADP + phosphate + H(+). It functions in the pathway purine metabolism; IMP biosynthesis via de novo pathway; N(2)-formyl-N(1)-(5-phospho-D-ribosyl)glycinamide from N(1)-(5-phospho-D-ribosyl)glycinamide (formate route): step 1/1. Functionally, involved in the de novo purine biosynthesis. Catalyzes the transfer of formate to 5-phospho-ribosyl-glycinamide (GAR), producing 5-phospho-ribosyl-N-formylglycinamide (FGAR). Formate is provided by PurU via hydrolysis of 10-formyl-tetrahydrofolate. This chain is Formate-dependent phosphoribosylglycinamide formyltransferase, found in Salmonella choleraesuis (strain SC-B67).